The following is a 1153-amino-acid chain: Stress response protein nst1 (1153 aa).

4 disordered regions span residues 1-212 (MVPA…TSTQ), 288-364 (QGSF…DEET), 421-467 (ESLH…EQRM), and 507-941 (MEEE…TQRD). Over residues 11–30 (SSSTMPNSSSTTAHSAPTTN) the composition is skewed to low complexity. Positions 53–63 (NRKKQKRRQKQ) are enriched in basic residues. A compositionally biased stretch (low complexity) spans 64 to 73 (AARLAERQLA). The span at 76–90 (HVSTDDATQNGSSHT) shows a compositional bias: polar residues. Basic and acidic residues-rich tracts occupy residues 91–109 (NPER…DHEQ) and 116–128 (YPKD…EAHI). A compositionally biased stretch (polar residues) spans 129–140 (DSQNPQGPNGTE). Over residues 146–160 (TGRKSKKKKGKKGRN) the composition is skewed to basic residues. Positions 169–182 (TSTPMSTPSVSMSH) are enriched in low complexity. The span at 312-321 (GQHTRTQGQF) shows a compositional bias: polar residues. Acidic residues-rich tracts occupy residues 332–363 (TEDD…EDEE) and 433–462 (DDED…DAMT). The stretch at 447–658 (SQEEEDYEED…EQQAKKDTAK (212 aa)) forms a coiled coil. Composition is skewed to basic and acidic residues over residues 507-526 (MEEE…EAQK) and 536-674 (QAKE…DQAK). Residues 721–739 (RQPSQQDSHSSSPHSQAPS) are compositionally biased toward low complexity. The span at 740-769 (TDPSQASLSPRSMPVSQSSGVASGNSQQGQ) shows a compositional bias: polar residues. The segment covering 913-925 (PISRPSPIKRPSS) has biased composition (low complexity). The segment covering 931–941 (QKGDDRTTQRD) has biased composition (basic and acidic residues).

This sequence belongs to the NST1 family.

Its subcellular location is the cytoplasm. May act as a negative regulator of salt tolerance. The sequence is that of Stress response protein nst1 (nst1) from Aspergillus fumigatus (strain ATCC MYA-4609 / CBS 101355 / FGSC A1100 / Af293) (Neosartorya fumigata).